Here is a 2004-residue protein sequence, read N- to C-terminus: Immunoglobulin A1 protease (2004 aa).

An N-terminal signal peptide occupies residues 1–42 (MEKYFGEKQERFSFRKLSVGLVSATISSLFFMSVLASSSVDA). The propeptide occupies 43–99 (QETAGVHYKYVADSELSSEEKKQLVYDIPTYVENDDETYYLVYKLNSQNQLAELPNT). Residues 96-100 (LPNTG) carry the LPXTG sorting signal motif. Position 99 is a pentaglycyl murein peptidoglycan amidated threonine (T99). The next 2 membrane-spanning stretches (helical) occupy residues 106–125 (QALV…FAVS) and 132–154 (KTVL…VHAL). Residues 155–2004 (ENHLLLNYNT…FRSSIFENKK (1850 aa)) lie on the Extracellular side of the membrane. Disordered stretches follow at residues 194 to 213 (TTSE…PTKQ), 235 to 305 (QEQT…NPQD), 373 to 394 (EIVS…TKKT), and 422 to 720 (PELP…PEKT). 2 stretches are compositionally biased toward polar residues: residues 197–213 (ESEV…PTKQ) and 235–246 (QEQTPVSSTKPT). Basic and acidic residues predominate over residues 276–296 (LAEHKNLETKKEEKISPKEKT). In terms of domain architecture, G5 spans 314–393 (KPELLYREET…PRIVEKGTKK (80 aa)). 3 repeat units span residues 419 to 435 (AIQP…KGEP), 436 to 452 (EVQP…KGET), and 453 to 469 (EVQP…KGEP). Residues 419–469 (AIQPELPEAVVSDKGEPEVQPTLPEAVVTDKGETEVQPESPDTVVSDKGEP) are 3 X 17 AA approximate tandem repeats. The segment covering 485 to 511 (VKPETPVEKTKEQGPEKTEEVPVKPTE) has biased composition (basic and acidic residues). 2 stretches are compositionally biased toward polar residues: residues 516-529 (NPNE…SIQE) and 538-572 (EEST…SVGE). Residues 574 to 591 (NKPEHNDSKNENSEKTVE) show a composition bias toward basic and acidic residues. Polar residues-rich tracts occupy residues 618–639 (EETQ…SNKP) and 648–681 (ESNQ…PSNG). Over residues 682-699 (NSTEDVSTESNTSNSNGN) the composition is skewed to low complexity. Residues 700 to 720 (EEIKQENELDPDKKVEEPEKT) are compositionally biased toward basic and acidic residues. H1645 contributes to the Zn(2+) binding site. E1646 is an active-site residue. Zn(2+) is bound by residues H1649 and E1669.

Belongs to the peptidase M26 family. It depends on Zn(2+) as a cofactor. In terms of processing, the Gram-positive cell-wall anchor motif LPXTG is located in the N-terminal part, in contrast to such motifs in other known streptococcal and staphylococcal proteins. The protease could be cleaved by the sortase and anchored in the membrane via the two potential N-terminal transmembrane domains, whereas the propeptide located prior to the LPXTG motif would remain attached to the cell wall peptidoglycan by an amide bond.

The protein resides in the secreted. Its subcellular location is the cell wall. It is found in the membrane. It catalyses the reaction Cleavage of Pro-|-Thr bond in the hinge region of the heavy chain of human IgA.. In terms of biological role, zinc metalloproteinase which cleaves human immunoglobulin A1 (IgA1) in the hinge region, rendering it less efficient in coating the surface of colonizing or invading pneumococci. Strongly contributes to virulence in mice. May be responsible for pneumococcal infection and is potentially involved in distinct stages of pneumococcal disease. This is Immunoglobulin A1 protease (iga) from Streptococcus pneumoniae serotype 4 (strain ATCC BAA-334 / TIGR4).